The sequence spans 235 residues: Probable transcriptional regulatory protein JJD26997_0557 (235 aa).

It belongs to the TACO1 family.

The protein localises to the cytoplasm. This chain is Probable transcriptional regulatory protein JJD26997_0557, found in Campylobacter jejuni subsp. doylei (strain ATCC BAA-1458 / RM4099 / 269.97).